The primary structure comprises 225 residues: NAD(P)H-quinone oxidoreductase subunit K, chloroplastic (225 aa).

Positions 43, 44, 108, and 139 each coordinate [4Fe-4S] cluster.

The protein belongs to the complex I 20 kDa subunit family. NDH is composed of at least 16 different subunits, 5 of which are encoded in the nucleus. Requires [4Fe-4S] cluster as cofactor.

Its subcellular location is the plastid. It is found in the chloroplast thylakoid membrane. The enzyme catalyses a plastoquinone + NADH + (n+1) H(+)(in) = a plastoquinol + NAD(+) + n H(+)(out). It carries out the reaction a plastoquinone + NADPH + (n+1) H(+)(in) = a plastoquinol + NADP(+) + n H(+)(out). NDH shuttles electrons from NAD(P)H:plastoquinone, via FMN and iron-sulfur (Fe-S) centers, to quinones in the photosynthetic chain and possibly in a chloroplast respiratory chain. The immediate electron acceptor for the enzyme in this species is believed to be plastoquinone. Couples the redox reaction to proton translocation, and thus conserves the redox energy in a proton gradient. This is NAD(P)H-quinone oxidoreductase subunit K, chloroplastic from Oryza nivara (Indian wild rice).